A 101-amino-acid polypeptide reads, in one-letter code: RNA-binding protein Hfq (101 aa).

The 60-residue stretch at 9–68 (DPFLNALRRERVPVSIYLVNGIKLQGQVESFDQFVILLKNTVSQMVYKHAISTVVPSRPV) folds into the Sm domain. The disordered stretch occupies residues 63–101 (VPSRPVSHHSNTPSGSTNNYHGSNPSAPQQPQQDSDDAE). A compositionally biased stretch (polar residues) spans 70 to 86 (HHSNTPSGSTNNYHGSN).

It belongs to the Hfq family. Homohexamer.

RNA chaperone that binds small regulatory RNA (sRNAs) and mRNAs to facilitate mRNA translational regulation in response to envelope stress, environmental stress and changes in metabolite concentrations. Also binds with high specificity to tRNAs. The sequence is that of RNA-binding protein Hfq from Yersinia pseudotuberculosis serotype O:1b (strain IP 31758).